The chain runs to 195 residues: FMN-dependent NADH:quinone oxidoreductase (195 aa).

FMN-binding positions include serine 10, 16–18 (SQS), and 91–94 (MYNF).

Belongs to the azoreductase type 1 family. In terms of assembly, homodimer. FMN serves as cofactor.

The enzyme catalyses 2 a quinone + NADH + H(+) = 2 a 1,4-benzosemiquinone + NAD(+). It carries out the reaction N,N-dimethyl-1,4-phenylenediamine + anthranilate + 2 NAD(+) = 2-(4-dimethylaminophenyl)diazenylbenzoate + 2 NADH + 2 H(+). In terms of biological role, quinone reductase that provides resistance to thiol-specific stress caused by electrophilic quinones. Functionally, also exhibits azoreductase activity. Catalyzes the reductive cleavage of the azo bond in aromatic azo compounds to the corresponding amines. In Aeromonas salmonicida (strain A449), this protein is FMN-dependent NADH:quinone oxidoreductase.